Consider the following 291-residue polypeptide: Phosphatidylglycerol--prolipoprotein diacylglyceryl transferase (291 aa).

Transmembrane regions (helical) follow at residues 21 to 41, 60 to 80, 96 to 116, 130 to 150, 198 to 218, 225 to 245, and 260 to 280; these read VALH…MWLA, LLYA…VLFY, WDGG…MIIF, FIAP…FING, SQLY…NLFI, GAVS…VEFF, and ISMG…MMVW. R143 contributes to the a 1,2-diacyl-sn-glycero-3-phospho-(1'-sn-glycerol) binding site.

Belongs to the Lgt family.

It localises to the cell inner membrane. It catalyses the reaction L-cysteinyl-[prolipoprotein] + a 1,2-diacyl-sn-glycero-3-phospho-(1'-sn-glycerol) = an S-1,2-diacyl-sn-glyceryl-L-cysteinyl-[prolipoprotein] + sn-glycerol 1-phosphate + H(+). It participates in protein modification; lipoprotein biosynthesis (diacylglyceryl transfer). Catalyzes the transfer of the diacylglyceryl group from phosphatidylglycerol to the sulfhydryl group of the N-terminal cysteine of a prolipoprotein, the first step in the formation of mature lipoproteins. This Salmonella newport (strain SL254) protein is Phosphatidylglycerol--prolipoprotein diacylglyceryl transferase.